The primary structure comprises 100 residues: NAD(P)H-quinone oxidoreductase subunit 4L, chloroplastic (100 aa).

The next 3 helical transmembrane spans lie at 1-21, 29-49, and 63-83; these read MIEN…YGLI, ALMC…TFSN, and ISVI…ILII.

It belongs to the complex I subunit 4L family. As to quaternary structure, NDH is composed of at least 16 different subunits, 5 of which are encoded in the nucleus.

The protein localises to the plastid. The protein resides in the chloroplast thylakoid membrane. It catalyses the reaction a plastoquinone + NADH + (n+1) H(+)(in) = a plastoquinol + NAD(+) + n H(+)(out). The catalysed reaction is a plastoquinone + NADPH + (n+1) H(+)(in) = a plastoquinol + NADP(+) + n H(+)(out). In terms of biological role, NDH shuttles electrons from NAD(P)H:plastoquinone, via FMN and iron-sulfur (Fe-S) centers, to quinones in the photosynthetic chain and possibly in a chloroplast respiratory chain. The immediate electron acceptor for the enzyme in this species is believed to be plastoquinone. Couples the redox reaction to proton translocation, and thus conserves the redox energy in a proton gradient. In Angiopteris evecta (Mule's foot fern), this protein is NAD(P)H-quinone oxidoreductase subunit 4L, chloroplastic.